Here is a 63-residue protein sequence, read N- to C-terminus: MKAQDLRQKSVDELNQELLGLLREQFNMRMQASTGQLAQTHTLKQVRRDVARIKTVLTEKAGA.

This sequence belongs to the universal ribosomal protein uL29 family.

This Aeromonas salmonicida (strain A449) protein is Large ribosomal subunit protein uL29.